We begin with the raw amino-acid sequence, 474 residues long: Putative pectinesterase/pectinesterase inhibitor 38 (474 aa).

Positions Met1–Val130 are pectinesterase inhibitor 38. An N-linked (GlcNAc...) asparagine glycan is attached at Asn80. The segment at Asp164–Ser461 is pectinesterase 38. Substrate-binding residues include Thr241 and Gln271. Residue Asp294 is the Proton donor; for pectinesterase activity of the active site. The cysteines at positions 308 and 328 are disulfide-linked. Asp315 acts as the Nucleophile; for pectinesterase activity in catalysis. An N-linked (GlcNAc...) asparagine glycan is attached at Asn351. Substrate is bound by residues Arg380 and Trp382. Asn409 carries an N-linked (GlcNAc...) asparagine glycan.

This sequence in the N-terminal section; belongs to the PMEI family. The protein in the C-terminal section; belongs to the pectinesterase family.

The protein resides in the secreted. Its subcellular location is the cell wall. It carries out the reaction [(1-&gt;4)-alpha-D-galacturonosyl methyl ester](n) + n H2O = [(1-&gt;4)-alpha-D-galacturonosyl](n) + n methanol + n H(+). It participates in glycan metabolism; pectin degradation; 2-dehydro-3-deoxy-D-gluconate from pectin: step 1/5. In terms of biological role, acts in the modification of cell walls via demethylesterification of cell wall pectin. The protein is Putative pectinesterase/pectinesterase inhibitor 38 (PME38) of Arabidopsis thaliana (Mouse-ear cress).